The chain runs to 566 residues: Deformed epidermal autoregulatory factor 1 homolog (566 aa).

2 disordered regions span residues 33-62 and 163-191; these read AESE…ETRR and GLKG…KGGT. The span at 170-182 shows a compositional bias: pro residues; that stretch reads PLTPGPQSPPTPL. Phosphothreonine is present on Thr172. Ser177 is modified (phosphoserine). The residue at position 180 (Thr180) is a Phosphothreonine. Residues 194–274 enclose the SAND domain; the sequence is NWDPSVYDSE…QCLIQDGILN (81 aa). The Nuclear localization signal motif lies at 300–306; that stretch reads PYKRRKK. The interval 404–479 is interaction with LMO4; it reads IAPFPEAALP…QLKTLFEQAK (76 aa). Phosphothreonine is present on Thr433. Phosphoserine occurs at positions 444 and 449. 8 residues coordinate Zn(2+): Cys505, Cys508, Cys516, Cys519, Cys525, Cys529, His537, and Cys541. The MYND-type zinc finger occupies 505-541; it reads CVNCGREAMSECTGCHKVNYCSTFCQRKDWKDHQHVC.

Homodimer. Isoform 1 and isoform 2 may form a heterodimer. May interact with the corepressors NCOR1 and NCRO2. Identified in a complex with XRCC5 and XRCC6. Interacts (via the SAND domain) with the DNA-PK complex subunit XRCC6; the interaction is direct with XRCC6 and may be inhibited by DNA-binding. Interacts with LMO4; LMO4 blocks export from nucleus. Interacts with LMO2 and CLIM2. In terms of processing, may be phosphorylated by DNA-PK complex in a DNA independent manner (in vitro). In terms of tissue distribution, ubiquitously expressed during embryogenesis, with higher expression in regions of the central nervous system, dorsal root ganglia, submandibular gland, epidermis and breast. In 12-week-old NOD mice, expression of isoform 2 is sevenfold higher in lymph node stromal elements than in T-cells and tenfold higher than in B-cells.

Its subcellular location is the nucleus. It is found in the cytoplasm. In terms of biological role, transcription factor that binds to sequence with multiple copies of 5'-TTC[CG]G-3' present in its own promoter and that of the HNRPA2B1 gene. Down-regulates transcription of these genes. Binds to the retinoic acid response element (RARE) 5'-AGGGTTCACCGAAAGTTCA-3'. Activates the proenkephalin gene independently of promoter binding, probably through protein-protein interaction. Regulates epithelial cell proliferation and side-branching in the mammary gland. Required for neural tube closure and skeletal patterning. Controls the expression of peripheral tissue antigens in pancreatic lymph nodes. Isoform 1 displays greater transcriptional activity than isoform 2. Isoform 2 may inhibit transcriptional activity of isoform 1 by interacting with it and retaining it in the cytoplasm. Transcriptional activator of EIF4G3. May also involved in behavior. The protein is Deformed epidermal autoregulatory factor 1 homolog (Deaf1) of Mus musculus (Mouse).